An 872-amino-acid chain; its full sequence is Chaperone protein ClpB 2 (872 aa).

One can recognise a Clp R domain in the interval 6 to 148 (PNQFTEKAWE…KNIIKQVRGS (143 aa)). Repeat regions lie at residues 9 to 73 (FTEK…IQRQ) and 85 to 148 (LGRS…VRGS). Positions 161-342 (QSLEKYGRDL…RRFQQVYVDQ (182 aa)) are NBD1. 208–215 (GEPGVGKT) serves as a coordination point for ATP. Residues 343–551 (PSVEDTISIL…IAEIISKWTG (209 aa)) are linker. The stretch at 393-527 (IDLVDEAAAR…TERELSQTQG (135 aa)) forms a coiled coil. Residues 561-772 (EKEKLLHLED…RIDEVIIFHS (212 aa)) form an NBD2 region. Residue 611 to 618 (GPTGVGKT) coordinates ATP. The interval 773 to 872 (LDKKELRQIV…SRLPVEVFSS (100 aa)) is C-terminal.

It belongs to the ClpA/ClpB family. As to quaternary structure, homohexamer. The oligomerization is ATP-dependent.

It is found in the cytoplasm. Functionally, part of a stress-induced multi-chaperone system, it is involved in the recovery of the cell from heat-induced damage, in cooperation with DnaK, DnaJ and GrpE. Acts before DnaK, in the processing of protein aggregates. Protein binding stimulates the ATPase activity; ATP hydrolysis unfolds the denatured protein aggregates, which probably helps expose new hydrophobic binding sites on the surface of ClpB-bound aggregates, contributing to the solubilization and refolding of denatured protein aggregates by DnaK. This chain is Chaperone protein ClpB 2 (clpB2), found in Nostoc sp. (strain PCC 7120 / SAG 25.82 / UTEX 2576).